The primary structure comprises 414 residues: GPI mannosyltransferase 1 (414 aa).

The next 10 helical transmembrane spans lie at 6–26 (ISHI…FGLY), 87–107 (YIFM…LSGI), 119–139 (IIML…STRG), 149–171 (IMLS…WLGL), 183–203 (LPSI…VPIV), 213–233 (FLIT…SIYG), 282–302 (MEKF…PLLF), 316–336 (FAFV…FLIF), 356–376 (IVAL…AYQL), and 387–407 (GLLF…SVFI).

Belongs to the PIGM family.

The protein localises to the endoplasmic reticulum membrane. The protein operates within glycolipid biosynthesis; glycosylphosphatidylinositol-anchor biosynthesis. Functionally, mannosyltransferase involved in glycosylphosphatidylinositol-anchor biosynthesis. Transfers the first alpha-1,4-mannose to GlcN-acyl-PI during GPI precursor assembly. Required for cell wall integrity. The chain is GPI mannosyltransferase 1 (GPI14) from Debaryomyces hansenii (strain ATCC 36239 / CBS 767 / BCRC 21394 / JCM 1990 / NBRC 0083 / IGC 2968) (Yeast).